A 75-amino-acid chain; its full sequence is Large ribosomal subunit protein bL31 (75 aa).

This sequence belongs to the bacterial ribosomal protein bL31 family. Type A subfamily. As to quaternary structure, part of the 50S ribosomal subunit.

Its function is as follows. Binds the 23S rRNA. This is Large ribosomal subunit protein bL31 from Pelodictyon phaeoclathratiforme (strain DSM 5477 / BU-1).